Reading from the N-terminus, the 270-residue chain is Phosphatidate cytidylyltransferase (270 aa).

Transmembrane regions (helical) follow at residues 17-37 (FVVL…AILI), 55-75 (FFYV…FEEP), 81-101 (ILFI…SQVF), 104-124 (VAAF…FLPI), 129-149 (GAAN…FAYF), 170-190 (EGVI…RLVV), 193-213 (LLSV…TVAI), and 248-268 (IDGL…LEGV).

The protein belongs to the CDS family.

It localises to the cell membrane. The catalysed reaction is a 1,2-diacyl-sn-glycero-3-phosphate + CTP + H(+) = a CDP-1,2-diacyl-sn-glycerol + diphosphate. The protein operates within phospholipid metabolism; CDP-diacylglycerol biosynthesis; CDP-diacylglycerol from sn-glycerol 3-phosphate: step 3/3. The sequence is that of Phosphatidate cytidylyltransferase (cdsA) from Thermotoga maritima (strain ATCC 43589 / DSM 3109 / JCM 10099 / NBRC 100826 / MSB8).